We begin with the raw amino-acid sequence, 325 residues long: Glutarate 2-hydroxylase (325 aa).

Fe cation contacts are provided by His-160, Asp-162, and His-292.

This sequence belongs to the glutarate hydroxylase family. As to quaternary structure, homotetramer. Fe(2+) serves as cofactor.

It catalyses the reaction glutarate + 2-oxoglutarate + O2 = (S)-2-hydroxyglutarate + succinate + CO2. It participates in amino-acid degradation. Functionally, acts as an alpha-ketoglutarate-dependent dioxygenase catalyzing hydroxylation of glutarate (GA) to L-2-hydroxyglutarate (L2HG). Functions in a L-lysine degradation pathway that proceeds via cadaverine, glutarate and L-2-hydroxyglutarate. This chain is Glutarate 2-hydroxylase, found in Escherichia coli O157:H7.